The following is a 729-amino-acid chain: Catalase-peroxidase (729 aa).

Residues 1–24 form a disordered region; the sequence is MDAKTNDGKAGQCPFTSGRGHKNR. A cross-link (tryptophyl-tyrosyl-methioninium (Trp-Tyr) (with M-243)) is located at residues 95 to 217; it reads WHSAGTYRIT…LAAVQMGLIY (123 aa). His-96 acts as the Proton acceptor in catalysis. A cross-link (tryptophyl-tyrosyl-methioninium (Tyr-Met) (with W-95)) is located at residues 217 to 243; it reads YVNPEGPNGQPDPLAAAKDIRETFLRM. A heme b-binding site is contributed by His-258.

This sequence belongs to the peroxidase family. Peroxidase/catalase subfamily. Homodimer or homotetramer. Heme b serves as cofactor. Post-translationally, formation of the three residue Trp-Tyr-Met cross-link is important for the catalase, but not the peroxidase activity of the enzyme.

The enzyme catalyses H2O2 + AH2 = A + 2 H2O. It carries out the reaction 2 H2O2 = O2 + 2 H2O. Functionally, bifunctional enzyme with both catalase and broad-spectrum peroxidase activity. The chain is Catalase-peroxidase from Nitrobacter winogradskyi (strain ATCC 25391 / DSM 10237 / CIP 104748 / NCIMB 11846 / Nb-255).